We begin with the raw amino-acid sequence, 626 residues long: MHKQTLSFQAEVAQLLNLVTHSLYSNPDIFLRELISNASDACDKLRFEALNDAALYEGDSELQVRLRYNKTANTLTITDNGIGLSEREAIENLGTIAKSGTRDFMAKLSGDQKNDAQLIGQFGVGFYSGFIVADRITVESRRAGLPATQGVRWSSEGTGEFEVSEMERAERGTSIILHLKDDARDYLNAWKLKGIINKYSDHISLPILMQKEEWKEGENGQPGEMVVTGEWETVNQAAALWTRAKKDITPEQYDEFYKQISYDSQAPLATTHNRVEGGTEYTQLLFIPAKAPMDLFNRDKAAGVKLYVRRVFIMDDAQALMPTYLRFVKGVVDSADLPLNVSRELLQESRAVKAIREGNTRRVLSMIEDLAANDADKFKAFYAEFGAVLKEGLGEDFANRERLAKLLRFASSTTDTVSVGFADYKARMKEGQDAIYYVTADTLAAAKSSPQLEIFRKKGIEVLLMADRVDEWALNYLHEFDGTPLQSVAKGAVDLGKLQDEDEKKAAEEAQTHFKPILDKLKEALKDKAKDVRATTRLVDSPACLVVQDGDMSTQLARMLKQAGQAVPEVKPILEVNAQHPLVKKLEAGEHFDDLAHILFDQALLAEGGMPEDPAAYVKRVNALLV.

The interval 1 to 343 (MHKQTLSFQA…SADLPLNVSR (343 aa)) is a; substrate-binding. The tract at residues 344 to 558 (ELLQESRAVK…DGDMSTQLAR (215 aa)) is b. Residues 559–626 (MLKQAGQAVP…YVKRVNALLV (68 aa)) form a c region.

This sequence belongs to the heat shock protein 90 family. Homodimer.

It localises to the cytoplasm. Its function is as follows. Molecular chaperone. Has ATPase activity. In Polaromonas sp. (strain JS666 / ATCC BAA-500), this protein is Chaperone protein HtpG.